The following is a 239-amino-acid chain: Increased recombination centers protein 22-2 (239 aa).

The signal sequence occupies residues 1-19 (MKLSTIFTAFAATIATVAG). Residues 20–161 (YETTGSKQTV…AAVSFFDPRL (142 aa)) lie on the Lumenal side of the membrane. The chain crosses the membrane as a helical span at residues 162–182 (IFLELVLLITFAGLIYVGYEI). Residues 183-239 (WGKQYFKGVAPVKAKKVSAAKASSPVATGPSTTSATGYDTNWIPESHLKQKKTKKVN) are Cytoplasmic-facing. A disordered region spans residues 202–222 (AKASSPVATGPSTTSATGYDT). A compositionally biased stretch (polar residues) spans 211-221 (GPSTTSATGYD).

The protein belongs to the IRC22 family.

It localises to the endoplasmic reticulum membrane. Its function is as follows. Is probably involved in a pathway contributing to genomic integrity. This chain is Increased recombination centers protein 22-2 (IRC22-2), found in Candida albicans (strain SC5314 / ATCC MYA-2876) (Yeast).